We begin with the raw amino-acid sequence, 869 residues long: Bifunctional uridylyltransferase/uridylyl-removing enzyme (869 aa).

The interval 1–331 is uridylyltransferase; that stretch reads MPTNLPALPM…FPSESQVTRV (331 aa). Residues 332–688 form a uridylyl-removing region; it reads INERFVERQG…ARISPAGEGL (357 aa). The HD domain occupies 450–572; sequence VDQHILMVVR…VGDERHLTAL (123 aa). 2 consecutive ACT domains span residues 689-773 and 800-869; these read QVAV…PSQG and LLSL…ALEI.

The protein belongs to the GlnD family. The cofactor is Mg(2+).

It catalyses the reaction [protein-PII]-L-tyrosine + UTP = [protein-PII]-uridylyl-L-tyrosine + diphosphate. It carries out the reaction [protein-PII]-uridylyl-L-tyrosine + H2O = [protein-PII]-L-tyrosine + UMP + H(+). Uridylyltransferase (UTase) activity is inhibited by glutamine, while glutamine activates uridylyl-removing (UR) activity. Its function is as follows. Modifies, by uridylylation and deuridylylation, the PII regulatory proteins (GlnB and homologs), in response to the nitrogen status of the cell that GlnD senses through the glutamine level. Under low glutamine levels, catalyzes the conversion of the PII proteins and UTP to PII-UMP and PPi, while under higher glutamine levels, GlnD hydrolyzes PII-UMP to PII and UMP (deuridylylation). Thus, controls uridylylation state and activity of the PII proteins, and plays an important role in the regulation of nitrogen assimilation and metabolism. The polypeptide is Bifunctional uridylyltransferase/uridylyl-removing enzyme (Cupriavidus pinatubonensis (strain JMP 134 / LMG 1197) (Cupriavidus necator (strain JMP 134))).